Consider the following 317-residue polypeptide: MRISTQMMYEQNMSGITNSQAEWMKLGEQMSTGKRVTNPSDDPIAASQAVVLSQAQAQNSQYALARTFATQKVSLEESVLSQVTTAIQTAQEKIVYAGNGTLSDDDRASLATDLQGIRDQLMNLANSTDGNGRYIFAGYKTEAAPFDQATGGYHGGEKSVTQQVDSARTMVIGHTGAQIFNSITSNAVPEPDGSDSEKNLFVMLDTAIAALKTPVEGNNVEKEKAAAAIDKTNRGLKNSLNNVLTVRAELGTQLSELSTLDSLGSDRALGQKLQMSNLVDVDWNSVISSYVMQQAALQASYKTFTDMQGMSLFQLNR.

The protein belongs to the bacterial flagellin family.

Its subcellular location is the secreted. The protein localises to the bacterial flagellum. The sequence is that of Flagellar hook-associated protein 3 (flgL) from Salmonella typhimurium (strain LT2 / SGSC1412 / ATCC 700720).